A 154-amino-acid chain; its full sequence is Ribonuclease H (154 aa).

One can recognise an RNase H type-1 domain in the interval 1-142 (MTKQVEIFTD…CDELARQGAN (142 aa)). Residues aspartate 10, glutamate 48, aspartate 70, and aspartate 134 each coordinate Mg(2+).

This sequence belongs to the RNase H family. In terms of assembly, monomer. The cofactor is Mg(2+).

Its subcellular location is the cytoplasm. It catalyses the reaction Endonucleolytic cleavage to 5'-phosphomonoester.. Functionally, endonuclease that specifically degrades the RNA of RNA-DNA hybrids. This is Ribonuclease H from Yersinia pestis bv. Antiqua (strain Antiqua).